The following is a 189-amino-acid chain: Protein GrpE (189 aa).

Positions 1 to 21 (MADEQNLDNQNPETPEQSQAD) are disordered. Positions 7-20 (LDNQNPETPEQSQA) are enriched in polar residues.

The protein belongs to the GrpE family. As to quaternary structure, homodimer.

It is found in the cytoplasm. Participates actively in the response to hyperosmotic and heat shock by preventing the aggregation of stress-denatured proteins, in association with DnaK and GrpE. It is the nucleotide exchange factor for DnaK and may function as a thermosensor. Unfolded proteins bind initially to DnaJ; upon interaction with the DnaJ-bound protein, DnaK hydrolyzes its bound ATP, resulting in the formation of a stable complex. GrpE releases ADP from DnaK; ATP binding to DnaK triggers the release of the substrate protein, thus completing the reaction cycle. Several rounds of ATP-dependent interactions between DnaJ, DnaK and GrpE are required for fully efficient folding. This is Protein GrpE from Stutzerimonas stutzeri (strain A1501) (Pseudomonas stutzeri).